The chain runs to 749 residues: Protein SEY1 homolog 2 (749 aa).

Over M1 to N671 the chain is Cytoplasmic. One can recognise a GB1/RHD3-type G domain in the interval G40 to M265. Residue G50–S57 participates in GTP binding. Residues N445–I465 adopt a coiled-coil conformation. Residues I672 to M692 traverse the membrane as a helical segment. The Lumenal portion of the chain corresponds to G693 to P695. Residues L696–L716 form a helical membrane-spanning segment. The Cytoplasmic portion of the chain corresponds to H717 to S749.

The protein belongs to the TRAFAC class dynamin-like GTPase superfamily. GB1/RHD3 GTPase family. RHD3 subfamily.

It is found in the endoplasmic reticulum membrane. Probable GTP-binding protein that may be involved in cell development. In Paramecium tetraurelia, this protein is Protein SEY1 homolog 2.